A 1342-amino-acid polypeptide reads, in one-letter code: DNA-directed RNA polymerase subunit beta (1342 aa).

Lys1022 and Lys1200 each carry N6-acetyllysine.

The protein belongs to the RNA polymerase beta chain family. The RNAP catalytic core consists of 2 alpha, 1 beta, 1 beta' and 1 omega subunit. When a sigma factor is associated with the core the holoenzyme is formed, which can initiate transcription.

It catalyses the reaction RNA(n) + a ribonucleoside 5'-triphosphate = RNA(n+1) + diphosphate. Functionally, DNA-dependent RNA polymerase catalyzes the transcription of DNA into RNA using the four ribonucleoside triphosphates as substrates. This Shigella flexneri serotype 5b (strain 8401) protein is DNA-directed RNA polymerase subunit beta.